Reading from the N-terminus, the 273-residue chain is Putative phosphoenolpyruvate synthase regulatory protein (273 aa).

153 to 160 (AVSRAGKT) contacts ADP.

Belongs to the pyruvate, phosphate/water dikinase regulatory protein family. PSRP subfamily.

It catalyses the reaction [pyruvate, water dikinase] + ADP = [pyruvate, water dikinase]-phosphate + AMP + H(+). It carries out the reaction [pyruvate, water dikinase]-phosphate + phosphate + H(+) = [pyruvate, water dikinase] + diphosphate. Its function is as follows. Bifunctional serine/threonine kinase and phosphorylase involved in the regulation of the phosphoenolpyruvate synthase (PEPS) by catalyzing its phosphorylation/dephosphorylation. In Stenotrophomonas maltophilia (strain R551-3), this protein is Putative phosphoenolpyruvate synthase regulatory protein.